Reading from the N-terminus, the 254-residue chain is Glutamate racemase (254 aa).

Substrate contacts are provided by residues 7 to 8 (DS) and 39 to 40 (YG). The active-site Proton donor/acceptor is Cys70. 71-72 (NT) lines the substrate pocket. The Proton donor/acceptor role is filled by Cys178. A substrate-binding site is contributed by 179–180 (TH).

It belongs to the aspartate/glutamate racemases family.

The catalysed reaction is L-glutamate = D-glutamate. Its pathway is cell wall biogenesis; peptidoglycan biosynthesis. In terms of biological role, provides the (R)-glutamate required for cell wall biosynthesis. This chain is Glutamate racemase, found in Aquifex aeolicus (strain VF5).